Here is a 649-residue protein sequence, read N- to C-terminus: Replication protein E1 (649 aa).

The Nuclear localization signal signature appears at 83–85 (KRK). Phosphoserine; by host occurs at positions 89, 93, and 107. Positions 106–115 (ISPRLDAIKL) match the Nuclear export signal motif. The tract at residues 146 to 188 (TQVEKHGDPENGGDGQERDTGRDIEGEGVEHREAEAVDDSTRE) is disordered. Positions 148–188 (VEKHGDPENGGDGQERDTGRDIEGEGVEHREAEAVDDSTRE) are enriched in basic and acidic residues. The DNA-binding region stretch occupies residues 187 to 353 (REHADTSGIL…QTVIEHSLAD (167 aa)). The region spanning 452–602 (IEFIPFLSKL…FPFDRNGNAV (151 aa)) is the SF3 helicase domain. Residue 478–485 (GPPDTGKS) coordinates ATP. Lys559 is covalently cross-linked (Glycyl lysine isopeptide (Lys-Gly) (interchain with G-Cter in SUMO)).

Belongs to the papillomaviridae E1 protein family. In terms of assembly, can form hexamers. Interacts with E2 protein; this interaction increases E1 DNA binding specificity. Interacts with host DNA polymerase subunit POLA2. Interacts with host single stranded DNA-binding protein RPA1. Interacts with host TOP1; this interaction stimulates the enzymatic activity of TOP1. Phosphorylated. Post-translationally, sumoylated.

The protein resides in the host nucleus. It carries out the reaction Couples ATP hydrolysis with the unwinding of duplex DNA by translocating in the 3'-5' direction.. It catalyses the reaction ATP + H2O = ADP + phosphate + H(+). In terms of biological role, ATP-dependent DNA 3'-5' helicase required for initiation of viral DNA replication. It forms a complex with the viral E2 protein. The E1-E2 complex binds to the replication origin which contains binding sites for both proteins. During the initial step, a dimer of E1 interacts with a dimer of protein E2 leading to a complex that binds the viral origin of replication with high specificity. Then, a second dimer of E1 displaces the E2 dimer in an ATP-dependent manner to form the E1 tetramer. Following this, two E1 monomers are added to each half of the site, which results in the formation of two E1 trimers on the viral ori. Subsequently, two hexamers will be created. The double hexamer acts as a bi-directional helicase machinery and unwinds the viral DNA and then recruits the host DNA polymerase to start replication. This is Replication protein E1 from Human papillomavirus 11.